We begin with the raw amino-acid sequence, 736 residues long: Probable beta-glucosidase L (736 aa).

A signal peptide spans 1-21; that stretch reads MNYRVPSLKATALAMAALTQA. N-linked (GlcNAc...) asparagine glycosylation occurs at Asn-224. The active site involves Asp-252. N-linked (GlcNAc...) asparagine glycans are attached at residues Asn-295, Asn-363, Asn-429, and Asn-607.

The protein belongs to the glycosyl hydrolase 3 family.

It localises to the secreted. The catalysed reaction is Hydrolysis of terminal, non-reducing beta-D-glucosyl residues with release of beta-D-glucose.. It functions in the pathway glycan metabolism; cellulose degradation. Beta-glucosidases are one of a number of cellulolytic enzymes involved in the degradation of cellulosic biomass. Catalyzes the last step releasing glucose from the inhibitory cellobiose. This Aspergillus terreus (strain NIH 2624 / FGSC A1156) protein is Probable beta-glucosidase L (bglL).